Here is a 164-residue protein sequence, read N- to C-terminus: Phosphopantetheine adenylyltransferase (164 aa).

S10 contributes to the substrate binding site. ATP-binding positions include 10–11 and H18; that span reads SF. Substrate-binding residues include K42, T79, and R93. ATP-binding positions include 94–96, E104, and 129–135; these read GLR and VRPIAAT.

Belongs to the bacterial CoaD family. As to quaternary structure, homohexamer. It depends on Mg(2+) as a cofactor.

It localises to the cytoplasm. The enzyme catalyses (R)-4'-phosphopantetheine + ATP + H(+) = 3'-dephospho-CoA + diphosphate. It participates in cofactor biosynthesis; coenzyme A biosynthesis; CoA from (R)-pantothenate: step 4/5. Reversibly transfers an adenylyl group from ATP to 4'-phosphopantetheine, yielding dephospho-CoA (dPCoA) and pyrophosphate. In Bradyrhizobium sp. (strain BTAi1 / ATCC BAA-1182), this protein is Phosphopantetheine adenylyltransferase.